Consider the following 76-residue polypeptide: Translational regulator CsrA (76 aa).

This sequence belongs to the CsrA/RsmA family. Homodimer; the beta-strands of each monomer intercalate to form a hydrophobic core, while the alpha-helices form wings that extend away from the core.

Its subcellular location is the cytoplasm. Its function is as follows. A translational regulator that binds mRNA to regulate translation initiation and/or mRNA stability. Usually binds in the 5'-UTR at or near the Shine-Dalgarno sequence preventing ribosome-binding, thus repressing translation. Its main target seems to be the major flagellin gene, while its function is anatagonized by FliW. The chain is Translational regulator CsrA from Helicobacter pylori (strain J99 / ATCC 700824) (Campylobacter pylori J99).